A 610-amino-acid polypeptide reads, in one-letter code: Elongation factor 4 (610 aa).

In terms of domain architecture, tr-type G spans 15 to 197; sequence KSIRNFSIIA…RIINDIPYPK (183 aa). Residues 27–32 and 144–147 contribute to the GTP site; these read DHGKST and NKID.

Belongs to the TRAFAC class translation factor GTPase superfamily. Classic translation factor GTPase family. LepA subfamily.

The protein resides in the cell membrane. The catalysed reaction is GTP + H2O = GDP + phosphate + H(+). Its function is as follows. Required for accurate and efficient protein synthesis under certain stress conditions. May act as a fidelity factor of the translation reaction, by catalyzing a one-codon backward translocation of tRNAs on improperly translocated ribosomes. Back-translocation proceeds from a post-translocation (POST) complex to a pre-translocation (PRE) complex, thus giving elongation factor G a second chance to translocate the tRNAs correctly. Binds to ribosomes in a GTP-dependent manner. This chain is Elongation factor 4, found in Buchnera aphidicola subsp. Acyrthosiphon pisum (strain APS) (Acyrthosiphon pisum symbiotic bacterium).